The following is an 83-amino-acid chain: U15-theraphotoxin-Cg1a (83 aa).

The signal sequence occupies residues 1 to 21 (MKAAILLAFAGLALLSVICHA). Positions 22-49 (SENVEQDSFEEVFSAIFAMEDDLKPKER) are excised as a propeptide. 3 disulfides stabilise this stretch: cysteine 51-cysteine 66, cysteine 58-cysteine 71, and cysteine 65-cysteine 77. An Alanine amide modification is found at alanine 81.

The protein belongs to the neurotoxin 10 (Hwtx-1) family. 66 (Jztx-24) subfamily. Expressed by the venom gland.

Its subcellular location is the secreted. Its function is as follows. Probable ion channel inhibitor. The chain is U15-theraphotoxin-Cg1a from Chilobrachys guangxiensis (Chinese earth tiger tarantula).